A 680-amino-acid chain; its full sequence is UvrABC system protein B (680 aa).

Residues 27–422 (AGALGGVTFQ…GRMAGEHVAE (396 aa)) enclose the Helicase ATP-binding domain. Residue 40–47 (GATGTGKT) coordinates ATP. A Beta-hairpin motif is present at residues 93 to 116 (YYDYYQPEAYIPQTDTYIEKSASI). The Helicase C-terminal domain maps to 443-609 (QVDDLLHEIH…PIVKRLDANS (167 aa)). Residues 641–676 (PELVSQLEIQMRDAAKKLEFEKAAEYRDKIHKLRER) enclose the UVR domain.

It belongs to the UvrB family. Forms a heterotetramer with UvrA during the search for lesions. Interacts with UvrC in an incision complex.

It is found in the cytoplasm. The UvrABC repair system catalyzes the recognition and processing of DNA lesions. A damage recognition complex composed of 2 UvrA and 2 UvrB subunits scans DNA for abnormalities. Upon binding of the UvrA(2)B(2) complex to a putative damaged site, the DNA wraps around one UvrB monomer. DNA wrap is dependent on ATP binding by UvrB and probably causes local melting of the DNA helix, facilitating insertion of UvrB beta-hairpin between the DNA strands. Then UvrB probes one DNA strand for the presence of a lesion. If a lesion is found the UvrA subunits dissociate and the UvrB-DNA preincision complex is formed. This complex is subsequently bound by UvrC and the second UvrB is released. If no lesion is found, the DNA wraps around the other UvrB subunit that will check the other stand for damage. This is UvrABC system protein B from Gloeobacter violaceus (strain ATCC 29082 / PCC 7421).